The sequence spans 447 residues: Exodeoxyribonuclease 7 large subunit (447 aa).

The protein belongs to the XseA family. Heterooligomer composed of large and small subunits.

The protein resides in the cytoplasm. The catalysed reaction is Exonucleolytic cleavage in either 5'- to 3'- or 3'- to 5'-direction to yield nucleoside 5'-phosphates.. Functionally, bidirectionally degrades single-stranded DNA into large acid-insoluble oligonucleotides, which are then degraded further into small acid-soluble oligonucleotides. The polypeptide is Exodeoxyribonuclease 7 large subunit (Geobacter sulfurreducens (strain ATCC 51573 / DSM 12127 / PCA)).